The chain runs to 211 residues: LexA repressor (211 aa).

Residues 27–47 (QTEIARAFGFKGVRAVQHHLD) constitute a DNA-binding region (H-T-H motif). Active-site for autocatalytic cleavage activity residues include Ser-131 and Lys-168.

It belongs to the peptidase S24 family. Homodimer.

It catalyses the reaction Hydrolysis of Ala-|-Gly bond in repressor LexA.. Functionally, represses a number of genes involved in the response to DNA damage (SOS response), including recA and lexA. In the presence of single-stranded DNA, RecA interacts with LexA causing an autocatalytic cleavage which disrupts the DNA-binding part of LexA, leading to derepression of the SOS regulon and eventually DNA repair. This Xylella fastidiosa (strain M23) protein is LexA repressor.